A 787-amino-acid chain; its full sequence is Phenylalanine--tRNA ligase beta subunit (787 aa).

The tRNA-binding domain occupies 39-149 (APAFSGVVVA…EDAPVGTNIR (111 aa)). The 76-residue stretch at 400–475 (PEAKQVGLRL…RVYGYENIPD (76 aa)) folds into the B5 domain. Mg(2+) contacts are provided by Asp453, Asp459, Glu462, and Glu463. The FDX-ACB domain maps to 694–786 (SKFQPVRRDL…VATEAGARLR (93 aa)).

It belongs to the phenylalanyl-tRNA synthetase beta subunit family. Type 1 subfamily. As to quaternary structure, tetramer of two alpha and two beta subunits. It depends on Mg(2+) as a cofactor.

The protein localises to the cytoplasm. The catalysed reaction is tRNA(Phe) + L-phenylalanine + ATP = L-phenylalanyl-tRNA(Phe) + AMP + diphosphate + H(+). In Neisseria gonorrhoeae (strain ATCC 700825 / FA 1090), this protein is Phenylalanine--tRNA ligase beta subunit.